Here is a 339-residue protein sequence, read N- to C-terminus: Annexin A2 (339 aa).

At serine 2 the chain carries N-acetylserine. The S100A10-binding site stretch occupies residues 2–24 (STVHEILCKLSLEGDHSTPASAY). At tyrosine 24 the chain carries Phosphotyrosine; by SRC. Serine 26 carries the post-translational modification Phosphoserine; by PKC. Annexin repeat units lie at residues 33–104 (FDAE…GLLK) and 105–176 (TPAQ…ALAK). Lysine 49 is modified (N6-acetyllysine; alternate). Residue lysine 49 forms a Glycyl lysine isopeptide (Lys-Gly) (interchain with G-Cter in SUMO1); alternate linkage. Lysine 49 participates in a covalent cross-link: Glycyl lysine isopeptide (Lys-Gly) (interchain with G-Cter in SUMO2); alternate. At lysine 152 the chain carries N6-acetyllysine. Serine 184 is subject to Phosphoserine. 2 Annexin repeats span residues 189 to 261 (ELID…NLVQ) and 265 to 336 (NKPL…YLCG). Tyrosine 199 bears the Phosphotyrosine mark. N6-acetyllysine is present on lysine 227.

Belongs to the annexin family. In terms of assembly, heterotetramer containing 2 light chains of S100A10/p11 and 2 heavy chains of ANXA2/p36. Interacts with ATP1B1. Interacts with DYSF. Interacts with COCH. Interacts (via repeat Annexin 1) with PCSK9 (via the C-terminal domain); the interaction inhibits the degradation of LDLR. Interacts with CEACAM1 (via the cytoplasmic domain); this interaction is regulated by phosphorylation of CEACAM1. Interacts with APPL2 and APPL1; targets APPL2 to endosomes and acting in parallel to RAB5A. Interacts with S100A4. May interact with UBAP2. Interacts with PLEKHG4B; this interaction is required for PLEKHG4B localization to cell-cell adhesions. As to quaternary structure, (Microbial infection) Interacts with classical swine fever virus envelope glycoprotein E2. Post-translationally, ISGylated.

It is found in the secreted. The protein localises to the extracellular space. Its subcellular location is the extracellular matrix. It localises to the basement membrane. The protein resides in the melanosome. Calcium-regulated membrane-binding protein whose affinity for calcium is greatly enhanced by anionic phospholipids. It binds two calcium ions with high affinity. May be involved in heat-stress response. Inhibits PCSK9-enhanced LDLR degradation, probably reduces PCSK9 protein levels via a translational mechanism but also competes with LDLR for binding with PCSK9. Binds to endosomes damaged by phagocytosis of particulate wear debris and participates in endosomal membrane stabilization, thereby limiting NLRP3 inflammasome activation. Required for endothelial cell surface plasmin generation and may support fibrinolytic surveillance and neoangiogenesis. Functionally, (Microbial infection) May serve as a receptor for classical swine fever virus (CSFV). Promotes CSFV infection. The chain is Annexin A2 (ANXA2) from Sus scrofa (Pig).